Here is a 268-residue protein sequence, read N- to C-terminus: Regulation of nuclear pre-mRNA domain-containing protein 1A (268 aa).

Positions 1–133 (MSAFSEAALE…QLRQALYGDR (133 aa)) constitute a CID domain.

It belongs to the UPF0400 (RTT103) family. As to quaternary structure, may form a heterodimer with RPRD1B. Associates with the RNA polymerase II subunit POLR2A (via CTD phosphorylated at 'Ser-2' and 'Ser-7' of the heptad repeats).

It localises to the nucleus. Its function is as follows. Interacts with phosphorylated C-terminal heptapeptide repeat domain (CTD) of the largest RNA polymerase II subunit POLR2A, and participates in dephosphorylation of the CTD by RPAP2. May act as a negative regulator of cyclin-D1 (CCND1) and cyclin-E (CCNE1) in the cell cycle. This is Regulation of nuclear pre-mRNA domain-containing protein 1A (RPRD1A) from Gallus gallus (Chicken).